A 133-amino-acid chain; its full sequence is Putative nickel-responsive regulator (133 aa).

Residues His-74, His-85, His-87, and Cys-93 each contribute to the Ni(2+) site.

It belongs to the transcriptional regulatory CopG/NikR family. The cofactor is Ni(2+).

In terms of biological role, transcriptional regulator. In Saccharolobus solfataricus (strain ATCC 35092 / DSM 1617 / JCM 11322 / P2) (Sulfolobus solfataricus), this protein is Putative nickel-responsive regulator.